A 547-amino-acid chain; its full sequence is Sesquiterpene synthase TPS3 (547 aa).

Residues Arg265, Asp302, Asp306, Arg443, and Asp446 each coordinate (2E,6E)-farnesyl diphosphate. 2 residues coordinate Mg(2+): Asp302 and Asp306. The DDXXD motif signature appears at 302-306; sequence DDIYD. Positions 446, 450, and 454 each coordinate Mg(2+).

It belongs to the terpene synthase family. Tpsb subfamily. In terms of assembly, monomer. Mg(2+) is required as a cofactor.

The protein localises to the cytoplasm. It catalyses the reaction (2E,6E)-farnesyl diphosphate = (1S,5S,6R)-alpha-bergamotene + diphosphate. Its pathway is secondary metabolite biosynthesis; terpenoid biosynthesis. Functionally, sesquiterpene synthase involved in the biosynthesis of volatile organic compounds. Mediates the conversion of (2E,6E)-farnesyl diphosphate (FPP) into alpha-bergamotene. Does not use (2E)-geranyl diphosphate (GPP) as substrate. This Cananga odorata (Ylang-ylang tree) protein is Sesquiterpene synthase TPS3.